The primary structure comprises 388 residues: Flavin-dependent monooxygenase (388 aa).

FAD-binding positions include 12–15 (VGVA), 34–36 (EKS), 44–47 (QALD), Arg105, Tyr267, Asp289, and 296–302 (PLSGQGN).

This sequence belongs to the aromatic-ring hydroxylase family. It depends on FAD as a cofactor.

It catalyses the reaction a tetracycline + NADPH + O2 + H(+) = a (1S,10aS)-3-(CONH2)-1-(Me2N)-3,3a,4,6-(HO)4-2,5-dioxo-1H,10aH,11H,11aH-cyclopenta[b]anthracene + CO + NADP(+) + H2O. The catalysed reaction is 7-chlorotetracycline + NADPH + O2 + H(+) = (1S,10S,10aS)-3-(CONH2)-9-Cl-1-(Me2N)-3,3a,4,10-(HO)4-10-Me-2,5-dioxo-1H,10aH,11H,11aH-cyclopenta[b]anthracen-6-olate + CO + NADP(+) + H2O. Its activity is regulated as follows. Inhibited by anhydrotetracycline. In terms of biological role, an FAD-requiring monooxygenase active on tetracycline antibiotic and some of its derivatives, which leads to their inactivation. Expression in E.coli confers high resistance to tetracycline and oxytetracycline, does not confer resistance to minocycline or tigecycline. Degrades tetracycline and oxytetracycline; the reaction requires NADPH. Degrades and confers resistance to chlortetracycline. In Unknown prokaryotic organism, this protein is Flavin-dependent monooxygenase (tet(50)).